We begin with the raw amino-acid sequence, 209 residues long: Dual specificity phosphatase 29 (209 aa).

Residues Asn-44–Leu-193 form the Tyrosine-protein phosphatase domain. Asn-137 to Arg-144 contacts substrate. The Phosphocysteine intermediate role is filled by Cys-138.

The protein belongs to the protein-tyrosine phosphatase family. Non-receptor class dual specificity subfamily.

The protein resides in the cytoplasm. The protein localises to the nucleus. It carries out the reaction O-phospho-L-tyrosyl-[protein] + H2O = L-tyrosyl-[protein] + phosphate. The enzyme catalyses O-phospho-L-seryl-[protein] + H2O = L-seryl-[protein] + phosphate. The catalysed reaction is O-phospho-L-threonyl-[protein] + H2O = L-threonyl-[protein] + phosphate. Its function is as follows. Dual specificity phosphatase able to dephosphorylate phosphotyrosine, phosphoserine and phosphothreonine residues within the same substrate, with a preference for phosphotyrosine as a substrate. Involved in the modulation of AMPK and MAPK1/2 signaling pathways. This is Dual specificity phosphatase 29 (dusp29) from Xenopus tropicalis (Western clawed frog).